The following is a 65-amino-acid chain: MADVKFVKPKNINGHFVKIKCRDCGNVQVVFARPSSTVTCNICGATIAKPTGGILATSGEVVEVL.

The Zn(2+) site is built by Cys21, Cys24, Cys40, and Cys43. A C4-type zinc finger spans residues 21–43 (CRDCGNVQVVFARPSSTVTCNIC).

The protein belongs to the eukaryotic ribosomal protein eS27 family. As to quaternary structure, part of the 30S ribosomal subunit. The cofactor is Zn(2+).

This Thermoplasma acidophilum (strain ATCC 25905 / DSM 1728 / JCM 9062 / NBRC 15155 / AMRC-C165) protein is Small ribosomal subunit protein eS27.